Reading from the N-terminus, the 296-residue chain is Formamidopyrimidine-DNA glycosylase (296 aa).

The Schiff-base intermediate with DNA role is filled by proline 2. The Proton donor role is filled by glutamate 3. Catalysis depends on lysine 58, which acts as the Proton donor; for beta-elimination activity. The DNA site is built by histidine 104, arginine 126, and lysine 169. The segment at serine 260–lysine 296 adopts an FPG-type zinc-finger fold. Arginine 286 (proton donor; for delta-elimination activity) is an active-site residue.

This sequence belongs to the FPG family. In terms of assembly, monomer. Zn(2+) serves as cofactor.

It catalyses the reaction Hydrolysis of DNA containing ring-opened 7-methylguanine residues, releasing 2,6-diamino-4-hydroxy-5-(N-methyl)formamidopyrimidine.. The enzyme catalyses 2'-deoxyribonucleotide-(2'-deoxyribose 5'-phosphate)-2'-deoxyribonucleotide-DNA = a 3'-end 2'-deoxyribonucleotide-(2,3-dehydro-2,3-deoxyribose 5'-phosphate)-DNA + a 5'-end 5'-phospho-2'-deoxyribonucleoside-DNA + H(+). In terms of biological role, involved in base excision repair of DNA damaged by oxidation or by mutagenic agents. Acts as a DNA glycosylase that recognizes and removes damaged bases. Has a preference for oxidized purines, such as 7,8-dihydro-8-oxoguanine (8-oxoG). Has AP (apurinic/apyrimidinic) lyase activity and introduces nicks in the DNA strand. Cleaves the DNA backbone by beta-delta elimination to generate a single-strand break at the site of the removed base with both 3'- and 5'-phosphates. The protein is Formamidopyrimidine-DNA glycosylase of Rhizobium etli (strain ATCC 51251 / DSM 11541 / JCM 21823 / NBRC 15573 / CFN 42).